The primary structure comprises 23 residues: Septenin 2a (23 aa).

Expressed in skin glands.

It localises to the secreted. Functionally, may act as an antimicrobial peptide. In Osteopilus septentrionalis (Cuban treefrog), this protein is Septenin 2a.